Here is a 337-residue protein sequence, read N- to C-terminus: Prenyltransferase terC (337 aa).

The Mg(2+) site is built by Asp-111 and Asp-115.

The protein belongs to the FPP/GGPP synthase family. Requires Mg(2+) as cofactor.

It participates in secondary metabolite biosynthesis. In terms of biological role, prenyltransferase; part of the gene cluster that mediates the biosynthesis of terpendoles, indole-diterpene (IDT) mycotoxins including terpendole I, terpendole K, terpendole C, as well as the kinesin Eg5 inhibitor terpendole E. Terpendoles biosynthesis begins with the synthesis of geranylgeranyl diphosphate (GGPP) by a yet unidentified GGPP synthase. Condensation of indole-3-glycerol phosphate with GGPP by the prenyltransferase terC then forms 3-geranylgeranylindole (3-GGI), followed by epoxidation and cyclization of this intermediate (by the FAD-dependent monooxygeanse terM and the terpene cyclase terB) to form paspaline. The cytochrome monooxygenase terQ then hydroxylates paspalline at C-11 to yield terpendole E. The cytochrome monooxygenase terP converts terpendole E to 13-desoxyterpendole I, and terQ converts 13-desoxyterpendole I into terpendole I. TerF and terK are required for conversion of terpendole I to terpendole C which is further converted to terpendole K. This Tolypocladium album (Soil fungus) protein is Prenyltransferase terC.